The following is a 494-amino-acid chain: MGSASKEYEFLSEIGLSSSHNLGNYVGGKWLGNGPLVSTLNPANNQVLPIAQVVEASLEDYEIGLKACEEAAKTWMQVPAPKRGDIVRQIGDALRSKLDYLGRLLSLEMGKILAEGIGEVQEVIDMCDFAVGLSRQLNGSVIPSERPNHMMLEMWNPLGIVGVITAFNFPCAVLGWNACIALVCGNCVVWKGAPTTPLITIAMTKLVAEVLEKNHLPGAIFTAMCGGAEIGEAIAKDTRIPLVSFTGSSKVGLTVQQTVSARSGKTLLELSGNNAIIVMDDADIQLAARSVLFAAVGTAGQRCTTCRRLLLHESVYDKVLEQLLTSYKQVKIGDPLEKGTLLGPLHTPESKKNFEKGIEVIKSQGGKVLTGGKAVEGEGNFVEPTIIEISSDAAVVKEELFAPVLYALKFKTFEEAVAINNSVPQGLSSSIFTRSPDNIFKWIGPMGSDCGIVNVNIPTNGAEIGGAFGGEKATGGGREAGSDSWKQYMRRSTW.

247 to 252 (GSSKVG) contacts NAD(+). Glu269 functions as the Proton acceptor in the catalytic mechanism. Cys303 serves as the catalytic Nucleophile.

It belongs to the aldehyde dehydrogenase family. As to quaternary structure, homotetramer.

The catalysed reaction is an aldehyde + NAD(+) + H2O = a carboxylate + NADH + 2 H(+). The polypeptide is Aldehyde dehydrogenase family 7 member A1 (BTG-26) (Brassica napus (Rape)).